Reading from the N-terminus, the 281-residue chain is MRIAVPNKGRLHEPALELLERAGLHVQDGSDRKLYADTVDPEVSVLFARAADIPEYVADGAAALGITGLDQERESETDLVDLLDLEFGSCRLVLASPEDGGVSAPEELSGGTVATEFPKITERYFEELGVRPDIVEVSGATELTPHVDIADAIVDITSTGTTLRMNRLEVVDEVLESSVRLFADPAVADDPKVEQVTTAFRSVLDADGKRYLMMNVPEDSLDAVEAEIPGMGGPTVMDVAGQDTVAVHVVVDEREVFEVIPKLKAAGATDILVTEIERLVP.

The protein belongs to the ATP phosphoribosyltransferase family. Long subfamily. The cofactor is Mg(2+).

It localises to the cytoplasm. It catalyses the reaction 1-(5-phospho-beta-D-ribosyl)-ATP + diphosphate = 5-phospho-alpha-D-ribose 1-diphosphate + ATP. Its pathway is amino-acid biosynthesis; L-histidine biosynthesis; L-histidine from 5-phospho-alpha-D-ribose 1-diphosphate: step 1/9. Its activity is regulated as follows. Feedback inhibited by histidine. Its function is as follows. Catalyzes the condensation of ATP and 5-phosphoribose 1-diphosphate to form N'-(5'-phosphoribosyl)-ATP (PR-ATP). Has a crucial role in the pathway because the rate of histidine biosynthesis seems to be controlled primarily by regulation of HisG enzymatic activity. The chain is ATP phosphoribosyltransferase from Natronomonas pharaonis (strain ATCC 35678 / DSM 2160 / CIP 103997 / JCM 8858 / NBRC 14720 / NCIMB 2260 / Gabara) (Halobacterium pharaonis).